The primary structure comprises 676 residues: Pentatricopeptide repeat-containing protein ATP4 homolog, chloroplastic (676 aa).

Residues 1-73 constitute a chloroplast transit peptide; it reads MASPSSLLSW…NSPRAAGLAR (73 aa). Residues 17–58 form a disordered region; the sequence is LSFQPKNPSPSPATARVSVQDPPPPPSDANPSPGRSSNTSRY. 10 PPR repeats span residues 148–182, 183–217, 218–252, 253–287, 288–322, 323–353, 358–388, 396–430, 431–465, and 532–566; these read EVIL…GVQP, DNAT…GCSP, DMLT…KWQL, DPVI…GVKP, NLVV…EAVP, NKAT…MKDE, DVVL…MKAS, DSWS…GFKP, NIFI…GITP, and RMPY…GIYS. The Smr domain occupies 578 to 662; the sequence is LHLRGLSVGA…WFLTTSVAAR (85 aa).

Belongs to the PPR family. P subfamily.

The protein localises to the plastid. The protein resides in the chloroplast. Involved in translation and accumulation of chloroplast ATP synthase subunits. The sequence is that of Pentatricopeptide repeat-containing protein ATP4 homolog, chloroplastic from Oryza sativa subsp. japonica (Rice).